Reading from the N-terminus, the 604-residue chain is Protein hemingway (604 aa).

Disordered regions lie at residues 1–70 (MSGA…GNPH), 103–309 (NQLS…PTSQ), 359–387 (SDRR…GGGI), and 544–585 (TIKA…IDLD). 4 stretches are compositionally biased toward acidic residues: residues 8–38 (SDEE…YIEP), 135–183 (EDEA…DDAQ), 194–214 (DDSD…EDEP), and 288–300 (EEPE…EENQ). Positions 368–379 (EMSSMTETTMTS) are enriched in low complexity.

Belongs to the CFAP97 family. In terms of tissue distribution, detected in ciliated sensory neurons at all stages of development, and in adult testis.

Its subcellular location is the cell projection. The protein localises to the cilium. It is found in the perikaryon. The protein resides in the cytoplasm. Functionally, involved in assembly and/or maintenance of motile cilia. Required during spermatogenesis for axoneme elongation. Necessary for optimal function of the chordotonal (hearing) organs. This Drosophila melanogaster (Fruit fly) protein is Protein hemingway.